The sequence spans 153 residues: Lipoprotein signal peptidase (153 aa).

Transmembrane regions (helical) follow at residues 6–26, 60–80, and 85–105; these read IVAV…SYIV, QQLL…WYLH, and DSFW…GNFI. Active-site residues include D115 and D131. The helical transmembrane segment at 124–144 threads the bilayer; that stretch reads FAIFNVADSYLTVGVIILLIA.

The protein belongs to the peptidase A8 family.

The protein resides in the cell membrane. It carries out the reaction Release of signal peptides from bacterial membrane prolipoproteins. Hydrolyzes -Xaa-Yaa-Zaa-|-(S,diacylglyceryl)Cys-, in which Xaa is hydrophobic (preferably Leu), and Yaa (Ala or Ser) and Zaa (Gly or Ala) have small, neutral side chains.. Its pathway is protein modification; lipoprotein biosynthesis (signal peptide cleavage). Functionally, this protein specifically catalyzes the removal of signal peptides from prolipoproteins. This Streptococcus pneumoniae (strain ATCC BAA-255 / R6) protein is Lipoprotein signal peptidase.